A 442-amino-acid chain; its full sequence is GTPase Der (442 aa).

EngA-type G domains follow at residues Arg2–Asn167 and Phe175–Met351. GTP is bound by residues Gly8–Ser15, Asp55–Ile59, Asn119–Glu122, Gly181–Ser188, Asp228–Ile232, and Asn293–Asp296. Residues Arg352 to Asn436 enclose the KH-like domain.

It belongs to the TRAFAC class TrmE-Era-EngA-EngB-Septin-like GTPase superfamily. EngA (Der) GTPase family. In terms of assembly, associates with the 50S ribosomal subunit.

Its function is as follows. GTPase that plays an essential role in the late steps of ribosome biogenesis. The sequence is that of GTPase Der from Ureaplasma parvum serovar 3 (strain ATCC 27815 / 27 / NCTC 11736).